The chain runs to 592 residues: Beta-xylosidase (592 aa).

The signal sequence occupies residues 1-19 (MYLNACRALTLISVLSLLA). Cys20 carries the N-palmitoyl cysteine lipid modification. Cys20 carries the S-diacylglycerol cysteine lipid modification.

Belongs to the glycosyl hydrolase 43 family.

It is found in the cell outer membrane. Its function is as follows. Xylosidase involved in ulvan degradation. Ulvan is the main polysaccharide component of the Ulvales (green seaweed) cell wall. It is composed of disaccharide building blocks comprising 3-sulfated rhamnose (Rha3S) linked to D-glucuronic acid (GlcA), L-iduronic acid (IduA), or D-xylose (Xyl). Beta-xylosidase converts Xyl-Rha3S, a product of alpha-L-rhamnosidase acting on Rha-Xyl-Rha3S oligosaccharides, further to Xyl and Rha3S. The chain is Beta-xylosidase from Formosa agariphila (strain DSM 15362 / KCTC 12365 / LMG 23005 / KMM 3901 / M-2Alg 35-1).